A 430-amino-acid polypeptide reads, in one-letter code: Probable sulfoacetate transporter SauU (430 aa).

The next 10 helical transmembrane spans lie at 47–67 (LGLVFSAFAYPYAAMQILGGW), 83–103 (LIWGVATVLTGFAGSVLILVV), 142–162 (FARLGGAITPPVVLVIVAAAG), 165–185 (EAFIVLGAVSLGWTLLYAFFF), 228–248 (WLVTFVDFCYGWSLWVYLTWL), 263–283 (LALFTALPLMAGVVGDTLGGV), 301–321 (AVLFVGLAGSLMFIAPMTFTA), 327–347 (VILLSLSFFFLELTNAVLWSL), 362–382 (MMNTGFGVAGMVSPVVFGYLI), and 390–410 (LPFMISGALLGVGALASLFIN).

This sequence belongs to the major facilitator superfamily.

It localises to the cell membrane. Functionally, may transport sulfoacetate into the cell. This Cupriavidus necator (strain ATCC 17699 / DSM 428 / KCTC 22496 / NCIMB 10442 / H16 / Stanier 337) (Ralstonia eutropha) protein is Probable sulfoacetate transporter SauU (sauU).